The primary structure comprises 435 residues: AP-2 complex subunit mu (435 aa).

The MHD domain occupies 170 to 434 (RNELFLDVLE…IGRSGIYETR (265 aa)). A 1,2-diacyl-sn-glycero-3-phospho-(1D-myo-inositol-3,4,5-trisphosphate) contacts are provided by K341, K345, and K354.

This sequence belongs to the adaptor complexes medium subunit family. Adaptor protein complex 2 (AP-2) is a heterotetramer composed of two large adaptins (alpha-type subunit and beta-type subunit), a medium adaptin (mu-type subunit) and a small adaptin (sigma-type subunit).

The protein localises to the cell membrane. It localises to the membrane. Its subcellular location is the coated pit. Functionally, component of the adaptor complexes which link clathrin to receptors in coated vesicles. Clathrin-associated protein complexes are believed to interact with the cytoplasmic tails of membrane proteins, leading to their selection and concentration. AP50 is a subunit of the plasma membrane adaptor. The complex binds polyphosphoinositide-containing lipids. The polypeptide is AP-2 complex subunit mu (ap2m1) (Xenopus tropicalis (Western clawed frog)).